The chain runs to 73 residues: Putative neurotoxin NaH-Cpp1a (73 aa).

The first 23 residues, 1-23, serve as a signal peptide directing secretion; the sequence is MKSFYGILCVAVLMMFHLEMSES. 3 disulfide bridges follow: Cys43–Cys58, Cys50–Cys63, and Cys57–Cys70.

As to expression, expressed outside of acontia.

It localises to the secreted. It is found in the nematocyst. Its function is as follows. Putative neurotoxin. The polypeptide is Putative neurotoxin NaH-Cpp1a (Calliactis polypus (Hermit crab anemone)).